The chain runs to 464 residues: ATP-dependent protease ATPase subunit HslU (464 aa).

Residues Val18, Gly60–Glu65, Asp277, Glu342, and Arg414 contribute to the ATP site.

This sequence belongs to the ClpX chaperone family. HslU subfamily. In terms of assembly, a double ring-shaped homohexamer of HslV is capped on each side by a ring-shaped HslU homohexamer. The assembly of the HslU/HslV complex is dependent on binding of ATP.

The protein localises to the cytoplasm. In terms of biological role, ATPase subunit of a proteasome-like degradation complex; this subunit has chaperone activity. The binding of ATP and its subsequent hydrolysis by HslU are essential for unfolding of protein substrates subsequently hydrolyzed by HslV. HslU recognizes the N-terminal part of its protein substrates and unfolds these before they are guided to HslV for hydrolysis. The chain is ATP-dependent protease ATPase subunit HslU from Lactobacillus delbrueckii subsp. bulgaricus (strain ATCC BAA-365 / Lb-18).